Consider the following 793-residue polypeptide: Ankyrin repeat domain-containing protein SOWAHB (793 aa).

Disordered regions lie at residues 83–185 (EEGL…QARA), 219–290 (ATAE…ELLT), 337–360 (QLPLEPGSTEPNSEPPDPCLSSHS), and 396–543 (DFVD…SPRV). 3 stretches are compositionally biased toward low complexity: residues 96–108 (APSAGGAAPCSPR), 134–144 (AGAAARAADAA), and 175–185 (AAAAAGAQARA). At S106 the chain carries Phosphoserine. Residues 220 to 244 (TAEEKPARALPAQDDRGASREREEG) are compositionally biased toward basic and acidic residues. Over residues 246 to 273 (LAEPAPVPAVAHSPPATVEAATSRASPP) the composition is skewed to low complexity. S271 carries the post-translational modification Phosphoserine. Residues 396 to 406 (DFVDQESDGSE) show a composition bias toward acidic residues. Composition is skewed to low complexity over residues 407-417 (ESSSGPKDSPG) and 498-508 (RSSLAGRAKLS). Residues 521 to 533 (KRSRRPPRSRKPS) are compositionally biased toward basic residues. ANK repeat units follow at residues 630–659 (TGYTALHWIAKHGDLRALQDLVSGAKKAGI) and 669–699 (CGYTPLHLAAIHGHQGVIKLLVQRLASRVNV). A Phosphoserine modification is found at S761.

The protein belongs to the SOWAH family.

In Homo sapiens (Human), this protein is Ankyrin repeat domain-containing protein SOWAHB (SOWAHB).